We begin with the raw amino-acid sequence, 340 residues long: Ferrochelatase (340 aa).

The Fe cation site is built by histidine 189 and glutamate 292.

Belongs to the ferrochelatase family.

It is found in the cytoplasm. It catalyses the reaction heme b + 2 H(+) = protoporphyrin IX + Fe(2+). It participates in porphyrin-containing compound metabolism; protoheme biosynthesis; protoheme from protoporphyrin-IX: step 1/1. Its function is as follows. Catalyzes the ferrous insertion into protoporphyrin IX. This chain is Ferrochelatase, found in Pseudomonas paraeruginosa (strain DSM 24068 / PA7) (Pseudomonas aeruginosa (strain PA7)).